Reading from the N-terminus, the 72-residue chain is Protein SlyX homolog (72 aa).

Residues 53–72 (KDISPSNIRREEEETPPPHY) form a disordered region.

It belongs to the SlyX family.

The chain is Protein SlyX homolog from Marinobacter nauticus (strain ATCC 700491 / DSM 11845 / VT8) (Marinobacter aquaeolei).